Here is a 421-residue protein sequence, read N- to C-terminus: Elongation factor 1-alpha (421 aa).

Residues 4-220 (NRHQNLAVIG…NGLPVPQPPT (217 aa)) enclose the tr-type G domain. Residues 13-20 (GHVDHGKS) are G1. GTP is bound at residue 13–20 (GHVDHGKS). Residue Ser20 participates in Mg(2+) binding. Residues 69 to 73 (GVTID) form a G2 region. A G3 region spans residues 90–93 (DCPG). Residues 90 to 94 (DCPGH) and 145 to 148 (NKMD) each bind GTP. The G4 stretch occupies residues 145 to 148 (NKMD). The tract at residues 184–186 (SAF) is G5.

The protein belongs to the TRAFAC class translation factor GTPase superfamily. Classic translation factor GTPase family. EF-Tu/EF-1A subfamily.

Its subcellular location is the cytoplasm. The enzyme catalyses GTP + H2O = GDP + phosphate + H(+). GTP hydrolase that promotes the GTP-dependent binding of aminoacyl-tRNA to the A-site of ribosomes during protein biosynthesis. In Halobacterium salinarum (strain ATCC 700922 / JCM 11081 / NRC-1) (Halobacterium halobium), this protein is Elongation factor 1-alpha.